A 41-amino-acid chain; its full sequence is MKIKSSLKSLKKRDLNSKLVRRRGRVYIINKTNPKFKARQK.

It belongs to the bacterial ribosomal protein bL36 family.

The sequence is that of Large ribosomal subunit protein bL36 from Pelagibacter ubique (strain HTCC1062).